The chain runs to 508 residues: Glycerol kinase (508 aa).

T14 provides a ligand contact to ADP. T14, T15, and S16 together coordinate ATP. Sn-glycerol 3-phosphate is bound at residue T14. R18 lines the ADP pocket. Sn-glycerol 3-phosphate-binding residues include R84, E85, and Y136. Glycerol is bound by residues R84, E85, and Y136. H232 carries the phosphohistidine; by HPr modification. D246 is a sn-glycerol 3-phosphate binding site. Glycerol contacts are provided by D246 and Q247. Residues T268 and G311 each coordinate ADP. ATP-binding residues include T268, G311, Q315, and G412. Residues G412 and N416 each coordinate ADP.

Belongs to the FGGY kinase family. In terms of assembly, homotetramer and homodimer (in equilibrium). Post-translationally, the phosphoenolpyruvate-dependent sugar phosphotransferase system (PTS), including enzyme I, and histidine-containing protein (HPr) are required for the phosphorylation, which leads to the activation of the enzyme.

It catalyses the reaction glycerol + ATP = sn-glycerol 3-phosphate + ADP + H(+). Its pathway is polyol metabolism; glycerol degradation via glycerol kinase pathway; sn-glycerol 3-phosphate from glycerol: step 1/1. Activated by phosphorylation and inhibited by fructose 1,6-bisphosphate (FBP). Functionally, key enzyme in the regulation of glycerol uptake and metabolism. Catalyzes the phosphorylation of glycerol to yield sn-glycerol 3-phosphate. This Streptococcus pyogenes serotype M12 (strain MGAS2096) protein is Glycerol kinase.